The sequence spans 319 residues: Sulfate adenylyltransferase subunit 2 (319 aa).

2 disordered regions span residues 1–22 and 296–319; these read MNPG…TRRP and RGAT…EGYF.

The protein belongs to the PAPS reductase family. CysD subfamily.

The catalysed reaction is sulfate + ATP + H(+) = adenosine 5'-phosphosulfate + diphosphate. It participates in antibiotic biosynthesis; mitomycin C biosynthesis. Its function is as follows. With CysN forms the ATP sulfurylase (ATPS) that catalyzes the adenylation of sulfate producing adenosine 5'-phosphosulfate (APS) and diphosphate, the first enzymatic step in sulfur assimilation pathway. APS synthesis involves the formation of a high-energy phosphoric-sulfuric acid anhydride bond driven by GTP hydrolysis by CysN coupled to ATP hydrolysis by CysD. This is Sulfate adenylyltransferase subunit 2 (mmcV) from Streptomyces lavendulae.